A 798-amino-acid chain; its full sequence is Integrin beta-1 (798 aa).

The signal sequence occupies residues 1–20 (MNLQLIFWIGLISSVCCVFG). At 21-728 (QADENRCLKA…ETPECPTGPD (708 aa)) the chain is on the extracellular side. A PSI domain is found at 26–76 (RCLKANAKSCGECIQAGPNCGWCTNSTFLQEGMPTSARCDDLEALKKKGCH). 28 disulfide bridges follow: C27-C45, C35-C464, C38-C64, C48-C75, C207-C213, C261-C301, C401-C415, C435-C462, C466-C486, C477-C489, C491-C500, C502-C533, C516-C531, C525-C536, C538-C553, C555-C576, C560-C574, C568-C579, C581-C590, C592-C615, C599-C613, C607-C618, C620-C630, C633-C636, C640-C691, C646-C665, C649-C661, and C699-C723. N50 carries an N-linked (GlcNAc...) asparagine glycan. Positions 75-91 (CHPNDIENPRGSKDIKK) are enriched in basic and acidic residues. Positions 75 to 105 (CHPNDIENPRGSKDIKKNKNVTNRSKGTAEK) are disordered. 2 N-linked (GlcNAc...) asparagine glycosylation sites follow: N94 and N97. Positions 140-378 (DYPIDLYYLM…QLIIDAYNSL (239 aa)) constitute a VWFA domain. Positions 152 and 154 each coordinate Mg(2+). Residues S154, D157, D158, and E189 each coordinate Ca(2+). Positions 207–213 (CTNEQNC) are CX3CL1-binding. Residue N212 is glycosylated (N-linked (GlcNAc...) asparagine). Residues N244, D246, P248, and E249 each coordinate Ca(2+). Residue E249 participates in Mg(2+) binding. Residue N269 is glycosylated (N-linked (GlcNAc...) asparagine). Residues 295-314 (LPNDGQCHLENDVYTMSHYY) form a CX3CL1-binding region. A362 contacts Ca(2+). 3 N-linked (GlcNAc...) asparagine glycosylation sites follow: N363, N406, and N417. The interaction with TMEM182 stretch occupies residues 383–465 (ILENSKLPEG…IILQFICECE (83 aa)). I-EGF domains follow at residues 466–501 (CQGEGIPGSPKCHDGNGTFECGACRCNEGRVGRHCE), 502–554 (CSTD…KFCE), 555–591 (CDNFNCDRSNGLICGGNGVCKCRVCECNPNYTGSACD), and 592–631 (CSLDTTSCMAVNGQICNGRGVCECGACKCTDPKFQGPTCE). The N-linked (GlcNAc...) asparagine glycan is linked to N481. N520 is a glycosylation site (N-linked (GlcNAc...) asparagine). Residue N584 is glycosylated (N-linked (GlcNAc...) asparagine). N-linked (GlcNAc...) asparagine glycosylation occurs at N669. The helical transmembrane segment at 729–749 (IIPIVAGVVAGIVLIGLALLL) threads the bilayer. Topologically, residues 750 to 798 (IWKLLMIIHDRREFAKFEKEKMNAKWDTGENPIYKSAVTTVVNPKYEGK) are cytoplasmic. Residues 762–767 (EFAKFE) are signal for sorting from recycling endosomes; interaction with ACAP1. Position 777 is a phosphothreonine (T777). A Phosphotyrosine modification is found at Y783. A Phosphoserine modification is found at S785. Positions 785–792 (SAVTTVVN) are interaction with ITGB1BP1. The residue at position 789 (T789) is a Phosphothreonine. The residue at position 794 (K794) is an N6-acetyllysine; alternate. K794 participates in a covalent cross-link: Glycyl lysine isopeptide (Lys-Gly) (interchain with G-Cter in SUMO1); alternate.

Belongs to the integrin beta chain family. In terms of assembly, interacts with seprase FAP (seprase); the interaction occurs at the cell surface of invadopodia membrane in a collagen-dependent manner. Heterodimer of an alpha and a beta subunit. Beta-1 associates with either alpha-1, alpha-2, alpha-3, alpha-4, alpha-5, alpha-6, alpha-7, alpha-8, alpha-9, alpha-10, alpha-11 or alpha-V. ITGA6:ITGB1 is found in a complex with CD9; interaction takes place in oocytes and is involved in sperm-egg fusion. Binds LGALS3BP and NMRK2, when associated with alpha-7, but not with alpha-5. Interacts with FLNB, FLNC and RANBP9. Interacts with KRT1 in the presence of RACK1 and SRC. Interacts with JAML; integrin alpha-4/beta-1 may regulate leukocyte to endothelial cells adhesion by controlling JAML homodimerization. Interacts with RAB21. Interacts (via the cytoplasmic region) with RAB25 (via the hypervariable C-terminal region). Interacts with MYO10. Interacts with ITGB1BP1 (via C-terminal region); the interaction is a prerequisite for focal adhesion disassembly. Interacts with TLN1; the interaction is prevented by competitive binding of ITGB1BP1. Interacts with ACAP1; required for ITGB1 recycling. Interacts with ASAP3. Interacts with FERMT2; the interaction is inhibited in presence of ITGB1BP1. Interacts with DAB2. Interacts with FGR and HCK. Interacts with EMP2; the interaction may be direct or indirect and ITGB1 has a heterodimer form. ITGA5:ITGB1 interacts with CCN3. ITGA4:ITGB1 is found in a ternary complex with CX3CR1 and CX3CL1. ITGA5:ITGB1 interacts with FBN1. ITGA5:ITGB1 interacts with IL1B. Interacts with MDK. ITGA4:ITGB1 interacts with MDK; this interaction mediates MDK-induced osteoblast cells migration through PXN phosphorylation. ITGA6:ITGB1 interacts with MDK; this interaction mediates MDK-induced neurite-outgrowth. ITGA5:ITGB1 interacts with ACE2. Interacts with TMEM182 and LAMB1. Interacts with tensin TNS3; TNS3 also interacts with PEAK1, thus acting as an adapter molecule to bridge the association of PEAK1 with ITGB1. Interacts with tensin TNS4; the interaction displaces tensin TNS3 from the ITGB1 cytoplasmic tail and promotes ITGB1 stability. Integrin ITGA9:ITGB1 interacts with SPP1/OPN (via N-terminus). Integrin ITGA9:ITGB1 interacts with TNC/TNFN3 (via the 3rd Fibronectin type-III domain). Integrins ITGA4:ITGB1 and ITGA9:ITGB1 interact with SVEP1 (via Sushi domain 21); thereby inhibit Ca(2+) intracellular signaling and as a result repress vasocontraction. ITGA4:ITGB1 and ITGA5:ITGB1 interacts with SELP. Interacts with CD248. ITGA5:ITGB1 interacts with IGFBP1. ITGA4:ITGB1 interacts with BCAM. Interacts with ADGRG6. Interacts with the C-terminal region of FLNC. Interacts with filamin FLNA isoform 3/VAR-1. As to quaternary structure, interacts with ACE2. Interacts with alpha-7B in cardiomyocytes of adult heart and alpha-7A and alpha-7B in adult skeletal muscle. Interacts with filamin FLNA isoform 3/VAR-1.

It localises to the cell membrane. It is found in the cell projection. The protein localises to the invadopodium membrane. The protein resides in the ruffle membrane. Its subcellular location is the recycling endosome. It localises to the melanosome. It is found in the lamellipodium. The protein localises to the ruffle. The protein resides in the cell junction. Its subcellular location is the focal adhesion. It localises to the sarcolemma. Functionally, integrins alpha-1/beta-1, alpha-2/beta-1, alpha-10/beta-1 and alpha-11/beta-1 are receptors for collagen. Integrins alpha-1/beta-1 and alpha-2/beta-2 recognize the proline-hydroxylated sequence G-F-P-G-E-R in collagen. Integrins alpha-2/beta-1, alpha-3/beta-1, alpha-4/beta-1, alpha-5/beta-1, alpha-8/beta-1, alpha-10/beta-1, alpha-11/beta-1 and alpha-V/beta-1 are receptors for fibronectin. Alpha-4/beta-1 recognizes one or more domains within the alternatively spliced CS-1 and CS-5 regions of fibronectin. Integrin alpha-5/beta-1 is a receptor for fibrinogen. Integrin alpha-1/beta-1, alpha-2/beta-1, alpha-6/beta-1 and alpha-7/beta-1 are receptors for lamimin. Integrin alpha-6/beta-1 (ITGA6:ITGB1) is present in oocytes and is involved in sperm-egg fusion. Integrin alpha-4/beta-1 is a receptor for VCAM1 and recognizes the sequence Q-I-D-S in VCAM1. Integrin alpha-9/beta-1 is a receptor for VCAM1, cytotactin and osteopontin. It recognizes the sequence A-E-I-D-G-I-E-L in cytotactin. Integrin alpha-3/beta-1 is a receptor for epiligrin, thrombospondin and CSPG4. Integrin alpha-3/beta-1 provides a docking site for FAP (seprase) at invadopodia plasma membranes in a collagen-dependent manner and hence may participate in the adhesion, formation of invadopodia and matrix degradation processes, promoting cell invasion. Alpha-3/beta-1 may mediate with LGALS3 the stimulation by CSPG4 of endothelial cells migration. Integrin alpha-V/beta-1 is a receptor for vitronectin. Beta-1 integrins recognize the sequence R-G-D in a wide array of ligands. When associated with alpha-7/beta-1 integrin, regulates cell adhesion and laminin matrix deposition. Involved in promoting endothelial cell motility and angiogenesis. Involved in osteoblast compaction through the fibronectin fibrillogenesis cell-mediated matrix assembly process and the formation of mineralized bone nodules. May be involved in up-regulation of the activity of kinases such as PKC via binding to KRT1. Together with KRT1 and RACK1, serves as a platform for SRC activation or inactivation. Plays a mechanistic adhesive role during telophase, required for the successful completion of cytokinesis. ITGA4:ITGB1 binds to fractalkine (CX3CL1) and may act as its coreceptor in CX3CR1-dependent fractalkine signaling. ITGA4:ITGB1 and ITGA5:ITGB1 bind to PLA2G2A via a site (site 2) which is distinct from the classical ligand-binding site (site 1) and this induces integrin conformational changes and enhanced ligand binding to site 1. ITGA5:ITGB1 acts as a receptor for fibrillin-1 (FBN1) and mediates R-G-D-dependent cell adhesion to FBN1. ITGA5:ITGB1 acts as a receptor for fibronectin FN1 and mediates R-G-D-dependent cell adhesion to FN1. ITGA5:ITGB1 is a receptor for IL1B and binding is essential for IL1B signaling. ITGA5:ITGB3 is a receptor for soluble CD40LG and is required for CD40/CD40LG signaling. Plays an important role in myoblast differentiation and fusion during skeletal myogenesis. ITGA9:ITGB1 may play a crucial role in SVEP1/polydom-mediated myoblast cell adhesion. Integrins ITGA9:ITGB1 and ITGA4:ITGB1 repress PRKCA-mediated L-type voltage-gated channel Ca(2+) influx and ROCK-mediated calcium sensitivity in vascular smooth muscle cells via their interaction with SVEP1, thereby inhibit vasocontraction. The polypeptide is Integrin beta-1 (ITGB1) (Bos taurus (Bovine)).